We begin with the raw amino-acid sequence, 302 residues long: Bacteriochlorophyll synthase 33 kDa chain (302 aa).

Transmembrane regions (helical) follow at residues 25-45, 49-69, 97-117, 119-139, 145-165, 166-186, 223-243, 246-266, and 275-295; these read ITWFPPIWAYLCGTVSVGIWP, WPLVLLGMVLAGPLVCGMSQA, WGLYIALLMTVLSLAVGWMLG, WGFGATVFGVLAAWAYSVEPI, GWWGPGLVALCYEGLPWFTGA, AVLSAGAPSFFIVTVALLYAF, LACTVMAMAQILVITLLVIWG, IHAGIITALLVAQLFAMRVLL, and WYNGTGVTLYVLGMMVAAFAI.

It localises to the cell membrane. Its pathway is porphyrin-containing compound metabolism; bacteriochlorophyll biosynthesis (light-independent). In terms of biological role, catalyzes the esterification of bacteriochlorophyllide a by geranylgeraniol-PPi. This is Bacteriochlorophyll synthase 33 kDa chain (bchG) from Cereibacter sphaeroides (strain ATCC 17023 / DSM 158 / JCM 6121 / CCUG 31486 / LMG 2827 / NBRC 12203 / NCIMB 8253 / ATH 2.4.1.) (Rhodobacter sphaeroides).